The chain runs to 128 residues: Large-conductance mechanosensitive channel (128 aa).

A run of 2 helical transmembrane segments spans residues 11–31 and 70–90; these read FALK…AAFG and GAFI…FIFV.

Belongs to the MscL family. As to quaternary structure, homopentamer.

Its subcellular location is the cell membrane. Functionally, channel that opens in response to stretch forces in the membrane lipid bilayer. May participate in the regulation of osmotic pressure changes within the cell. The polypeptide is Large-conductance mechanosensitive channel (Listeria innocua serovar 6a (strain ATCC BAA-680 / CLIP 11262)).